We begin with the raw amino-acid sequence, 628 residues long: uncharacterized protein (628 aa).

This sequence belongs to the ATP-dependent AMP-binding enzyme family.

This is an uncharacterized protein from Pseudomonas aeruginosa (strain ATCC 15692 / DSM 22644 / CIP 104116 / JCM 14847 / LMG 12228 / 1C / PRS 101 / PAO1).